The primary structure comprises 1642 residues: MSTAIREVGVWRQTRTLLLKNYLIKCRTKKSSVQEILFPLFFLFWLILISMMHPNKKYEEVPNIELNPMDKFTLSNLILGYTPVTNITSSIMQKVSTDHLPDVIITEEYTNEKEMLTSSLSKPSNFVGVVFKDSMSYELRFFPDMIPVSSIYMDSRAGCSKSCEAAQYWSSGFTVLQASIDAAIIQLKTNVSLWKELESTKAVIMGETAVVEIDTFPRGVILIYLVIAFSPFGYFLAIHIVAEKEKKIKEFLKIMGLHDTAFWLSWVLLYTSLIFLMSLLMAVIATASLLFPQSSSIVIFLLFFLYGLSSVFFALMLTPLFKKSKHVGIVEFFVTVAFGFIGLMIILIESFPKSLVWLFSPFCHCTFVIGIAQVMHLEDFNEGASFSNLTAGPYPLIITIIMLTLNSIFYVLLAVYLDQVIPGEFGLRRSSLYFLKPSYWSKSKRNYEELSEGNVNGNISFSEIIEPVSSEFVGKEAIRISGIQKTYRKKGENVEALRNLSFDIYEGQITALLGHSGTGKSTLMNILCGLCPPSDGFASIYGHRVSEIDEMFEARKMIGICPQLDIHFDVLTVEENLSILASIKGIPANNIIQEVQKVLLDLDMQTIKDNQAKKLSGGQKRKLSLGIAVLGNPKILLLDEPTAGMDPCSRHIVWNLLKYRKANRVTVFSTHFMDEADILADRKAVISQGMLKCVGSSMFLKSKWGIGYRLSMYIDKYCATESLSSLVKQHIPGATLLQQNDQQLVYSLPFKDMDKFSGLFSALDSHSNLGVISYGVSMTTLEDVFLKLEVEAEIDQADYSVFTQQPLEEEMDSKSFDEMEQSLLILSETKAALVSTMSLWKQQMYTIAKFHFFTLKRESKSVRSVLLLLLIFFTVQIFMFLVHHSFKNAVVPIKLVPDLYFLKPGDKPHKYKTSLLLQNSADSDISDLISFFTSQNIMVTMINDSDYVSVAPHSAALNVMHSEKDYVFAAVFNSTMVYSLPILVNIISNYYLYHLNVTETIQIWSTPFFQEITDIVFKIELYFQAALLGIIVTAMPPYFAMENAENHKIKAYTQLKLSGLLPSAYWIGQAVVDIPLFFIILILMLGSLLAFHYGLYFYTVKFLAVVFCLIGYVPSVILFTYIASFTFKKILNTKEFWSFIYSVAALACIAITEITFFMGYTIATILHYAFCIIIPIYPLLGCLISFIKISWKNVRKNVDTYNPWDRLSVAVISPYLQCVLWIFLLQYYEKKYGGRSIRKDPFFRNLSTKSKNRKLPEPPDNEDEDEDVKAERLKVKELMGCQCCEEKPSIMVSNLHKEYDDKKDFLLSRKVKKVATKYISFCVKKGEILGLLGPNGAGKSTIINILVGDIEPTSGQVFLGDYSSETSEDDDSLKCMGYCPQINPLWPDTTLQEHFEIYGAVKGMSASDMKEVISRITHALDLKEHLQKTVKKLPAGIKRKLCFALSMLGNPQITLLDEPSTGMDPKAKQHMWRAIRTAFKNRKRAAILTTHYMEEAEAVCDRVAIMVSGQLRCIGTVQHLKSKFGKGYFLEIKLKDWIENLEVDRLQREIQYIFPNASRQESFSSILAYKIPKEDVQSLSQSFFKLEEAKHAFAIEEYSFSQATLEQVFVELTKEQEEEDNSCGTLNSTLWWERTQEDRVVF.

Residues 32-52 form a helical membrane-spanning segment; sequence SVQEILFPLFFLFWLILISMM. N86 carries N-linked (GlcNAc...) asparagine glycosylation. The next 6 membrane-spanning stretches (helical) occupy residues 220-240, 264-284, 297-317, 328-348, 355-375, and 396-416; these read VILI…AIHI, LSWV…MAVI, IVIF…ALML, GIVE…IILI, LVWL…AQVM, and LIIT…LAVY. The N-linked (GlcNAc...) asparagine glycan is linked to N458. An ABC transporter 1 domain is found at 478–713; it reads IRISGIQKTY…WGIGYRLSMY (236 aa). 514–521 serves as a coordination point for ATP; sequence GHSGTGKS. The next 2 membrane-spanning stretches (helical) occupy residues 866 to 886 and 967 to 987; these read LLLL…HHSF and VFAA…VNII. A glycan (N-linked (GlcNAc...) asparagine) is linked at N996. The next 6 membrane-spanning stretches (helical) occupy residues 1021–1041, 1071–1091, 1102–1122, 1139–1159, 1169–1189, and 1207–1227; these read LYFQ…YFAM, VVDI…LLAF, FLAV…FTYI, FIYS…FFMG, AFCI…FIKI, and LSVA…LLQY. Positions 1249-1268 are disordered; it reads KSKNRKLPEPPDNEDEDEDV. Acidic residues predominate over residues 1259 to 1268; the sequence is PDNEDEDEDV. The ABC transporter 2 domain maps to 1290–1533; sequence IMVSNLHKEY…FGKGYFLEIK (244 aa). 1333 to 1340 provides a ligand contact to ATP; the sequence is GPNGAGKS.

Belongs to the ABC transporter superfamily. ABCA family. In terms of processing, N-glycosylated. In terms of tissue distribution, ubiquitously expressed. Highly expressed in testis, skeletal muscle, kidney, liver and placenta. Expressed in both the epithelial and mesenchymal compartments, present within the outer root sheath (ORS) of the hair follicle as well as dermal sheath. Expressed in multiple regions of the brain, including the hippocampus, superior frontal and inferior temporal cortices. Strongly expressed in neurons and moderately in microglia, with only weak expression in astrocytes and oligodendrocytes.

It localises to the golgi apparatus membrane. It is found in the lysosome membrane. Its subcellular location is the late endosome membrane. The protein resides in the cell membrane. The catalysed reaction is cholesterol(in) + ATP + H2O = cholesterol(out) + ADP + phosphate + H(+). Its function is as follows. Cholesterol efflux transporter in macrophages that is responsible for APOAI/high-density lipoproteins (HDL) formation at the plasma membrane under high cholesterol levels and participates in reverse cholesterol transport. May play a role in the processing of autolysosomes. This chain is Cholesterol transporter ABCA5, found in Homo sapiens (Human).